A 79-amino-acid polypeptide reads, in one-letter code: MGSLSIWHWIVVIAVVLLLFGRGKISDLMGDVAQGIKSFKKGLQDDEKTAEKPDPVKSIDHNAPTAAAPTRTDVGSKAV.

The chain crosses the membrane as a helical span at residues 1-21 (MGSLSIWHWIVVIAVVLLLFG). The span at 43-60 (LQDDEKTAEKPDPVKSID) shows a compositional bias: basic and acidic residues. The interval 43-79 (LQDDEKTAEKPDPVKSIDHNAPTAAAPTRTDVGSKAV) is disordered.

The protein belongs to the TatA/E family. The Tat system comprises two distinct complexes: a TatABC complex, containing multiple copies of TatA, TatB and TatC subunits, and a separate TatA complex, containing only TatA subunits. Substrates initially bind to the TatABC complex, which probably triggers association of the separate TatA complex to form the active translocon.

The protein localises to the cell inner membrane. In terms of biological role, part of the twin-arginine translocation (Tat) system that transports large folded proteins containing a characteristic twin-arginine motif in their signal peptide across membranes. TatA could form the protein-conducting channel of the Tat system. The polypeptide is Sec-independent protein translocase protein TatA (Rhodopseudomonas palustris (strain BisB5)).